The chain runs to 252 residues: 3-dehydroquinate dehydratase (252 aa).

3-dehydroquinate contacts are provided by residues 46-48 (EWR) and Arg82. His143 (proton donor/acceptor) is an active-site residue. Lys170 (schiff-base intermediate with substrate) is an active-site residue. Residues Arg212, Ser231, and Gln235 each coordinate 3-dehydroquinate.

The protein belongs to the type-I 3-dehydroquinase family. In terms of assembly, homodimer.

It carries out the reaction 3-dehydroquinate = 3-dehydroshikimate + H2O. It functions in the pathway metabolic intermediate biosynthesis; chorismate biosynthesis; chorismate from D-erythrose 4-phosphate and phosphoenolpyruvate: step 3/7. Its function is as follows. Involved in the third step of the chorismate pathway, which leads to the biosynthesis of aromatic amino acids. Catalyzes the cis-dehydration of 3-dehydroquinate (DHQ) and introduces the first double bond of the aromatic ring to yield 3-dehydroshikimate. This chain is 3-dehydroquinate dehydratase, found in Listeria welshimeri serovar 6b (strain ATCC 35897 / DSM 20650 / CCUG 15529 / CIP 8149 / NCTC 11857 / SLCC 5334 / V8).